The primary structure comprises 362 residues: DNA replication and repair protein RecF (362 aa).

31 to 38 (GDNAAGKT) is an ATP binding site.

Belongs to the RecF family.

The protein localises to the cytoplasm. In terms of biological role, the RecF protein is involved in DNA metabolism; it is required for DNA replication and normal SOS inducibility. RecF binds preferentially to single-stranded, linear DNA. It also seems to bind ATP. This Hydrogenovibrio crunogenus (strain DSM 25203 / XCL-2) (Thiomicrospira crunogena) protein is DNA replication and repair protein RecF.